The following is a 76-amino-acid chain: Defensin-like protein 164 (76 aa).

The signal sequence occupies residues 1–25 (MAKLLCSYLFICMFVLSGFLVFSSA). Disulfide bonds link Cys-31–Cys-76, Cys-41–Cys-61, Cys-46–Cys-70, and Cys-50–Cys-72.

This sequence belongs to the DEFL family.

It localises to the secreted. In Arabidopsis thaliana (Mouse-ear cress), this protein is Defensin-like protein 164 (LCR38).